Reading from the N-terminus, the 338-residue chain is Serine/threonine-protein kinase YabT (338 aa).

The 259-residue stretch at 28 to 286 (YTLRKQLGKG…PIKASPQPAT (259 aa)) folds into the Protein kinase domain. Residues 34–42 (LGKGANGIV) and Lys-55 each bind ATP. Asp-148 (proton acceptor) is an active-site residue. The segment at 266 to 312 (DAGQKAAQRKQPIKASPQPATRQRQQKPRQGKITKTRYTPKQKPAKS) is disordered. A compositionally biased stretch (basic residues) spans 289–309 (RQQKPRQGKITKTRYTPKQKP).

This sequence belongs to the protein kinase superfamily. Ser/Thr protein kinase family. In terms of processing, autophosphorylated.

The catalysed reaction is L-seryl-[protein] + ATP = O-phospho-L-seryl-[protein] + ADP + H(+). The enzyme catalyses L-threonyl-[protein] + ATP = O-phospho-L-threonyl-[protein] + ADP + H(+). Its function is as follows. Plays a role in the cell's commitment to sporulation; phosphorylates DNA replication initiation-control protein YabA. Deletion of this kinase delays entry into sporulation but does not affect final spore yield. Overexpression decreases biofilm formation; phosphorylation of YabA probably prevents biofilm formation. The polypeptide is Serine/threonine-protein kinase YabT (yabT) (Bacillus subtilis (strain 168)).